Here is a 67-residue protein sequence, read N- to C-terminus: Probable Sec-independent protein translocase protein TatE (67 aa).

A helical membrane pass occupies residues 4 to 21; that stretch reads ISITKLLVVAALVVLLFG. The disordered stretch occupies residues 46 to 67; sequence EDAGAKKEAGGDIQAEKLSHKE.

This sequence belongs to the TatA/E family. TatE subfamily.

It is found in the cell inner membrane. In terms of biological role, part of the twin-arginine translocation (Tat) system that transports large folded proteins containing a characteristic twin-arginine motif in their signal peptide across membranes. TatE shares overlapping functions with TatA. This Citrobacter koseri (strain ATCC BAA-895 / CDC 4225-83 / SGSC4696) protein is Probable Sec-independent protein translocase protein TatE.